A 72-amino-acid chain; its full sequence is Large ribosomal subunit protein uL29 (72 aa).

Belongs to the universal ribosomal protein uL29 family.

The chain is Large ribosomal subunit protein uL29 from Chlamydia felis (strain Fe/C-56) (Chlamydophila felis).